Consider the following 517-residue polypeptide: GMP synthase [glutamine-hydrolyzing] (517 aa).

The Glutamine amidotransferase type-1 domain occupies 9–199 (RILILDFGSQ…VLNACGCEGL (191 aa)). Cys-86 serves as the catalytic Nucleophile. Active-site residues include His-173 and Glu-175. Positions 200-392 (WTSASIIEDA…LGLPYNMLYR (193 aa)) constitute a GMPS ATP-PPase domain. An ATP-binding site is contributed by 227–233 (SGGVDSS).

As to quaternary structure, homodimer.

It carries out the reaction XMP + L-glutamine + ATP + H2O = GMP + L-glutamate + AMP + diphosphate + 2 H(+). It participates in purine metabolism; GMP biosynthesis; GMP from XMP (L-Gln route): step 1/1. Functionally, catalyzes the synthesis of GMP from XMP. This is GMP synthase [glutamine-hydrolyzing] from Vibrio atlanticus (strain LGP32) (Vibrio splendidus (strain Mel32)).